We begin with the raw amino-acid sequence, 84 residues long: Magnetosome protein MamR (84 aa).

Belongs to the magnetosome MamR family.

It localises to the magnetosome. May play a role in controlling magnetite number and size. Coexpression of mamLQRBIEMO in a deletion of the 17 gene mamAB operon restores magnetosome vesicle formation but not magnetite biosynthesis. The sequence is that of Magnetosome protein MamR from Magnetospirillum gryphiswaldense (strain DSM 6361 / JCM 21280 / NBRC 15271 / MSR-1).